A 319-amino-acid chain; its full sequence is Putative metal ion transporter YfjQ (319 aa).

The next 2 helical transmembrane spans lie at 254–274 (IMMT…IAGV) and 290–310 (GYFA…IWFV).

It belongs to the CorA metal ion transporter (MIT) (TC 1.A.35) family.

The protein resides in the cell membrane. This chain is Putative metal ion transporter YfjQ (yfjQ), found in Bacillus subtilis (strain 168).